The sequence spans 29 residues: Cytochrome b6-f complex subunit 8 (29 aa).

The chain crosses the membrane as a helical span at residues 3–23 (IVSIAWAALMVVFTFSLSLVV).

This sequence belongs to the PetN family. As to quaternary structure, the 4 large subunits of the cytochrome b6-f complex are cytochrome b6, subunit IV (17 kDa polypeptide, PetD), cytochrome f and the Rieske protein, while the 4 small subunits are PetG, PetL, PetM and PetN. The complex functions as a dimer.

It localises to the plastid. Its subcellular location is the chloroplast thylakoid membrane. Component of the cytochrome b6-f complex, which mediates electron transfer between photosystem II (PSII) and photosystem I (PSI), cyclic electron flow around PSI, and state transitions. The protein is Cytochrome b6-f complex subunit 8 of Angiopteris evecta (Mule's foot fern).